Consider the following 211-residue polypeptide: Protein-methionine-sulfoxide reductase heme-binding subunit MsrQ (211 aa).

Helical transmembrane passes span 10 to 30, 82 to 102, 116 to 136, and 153 to 173; these read WLKVCLHLAGLLPFLWLVWAI, LWCFAWATLHLTSYALLELGV, PYLTLGIISWVILLALAFTST, and FVYLVAILAPIHYLWSVKIIS.

This sequence belongs to the MsrQ family. In terms of assembly, heterodimer of a catalytic subunit (MsrP) and a heme-binding subunit (MsrQ). It depends on FMN as a cofactor. Heme b is required as a cofactor.

The protein localises to the cell inner membrane. Part of the MsrPQ system that repairs oxidized periplasmic proteins containing methionine sulfoxide residues (Met-O), using respiratory chain electrons. Thus protects these proteins from oxidative-stress damage caused by reactive species of oxygen and chlorine generated by the host defense mechanisms. MsrPQ is essential for the maintenance of envelope integrity under bleach stress, rescuing a wide series of structurally unrelated periplasmic proteins from methionine oxidation, including the primary periplasmic chaperone SurA and the lipoprotein Pal. MsrQ provides electrons for reduction to the reductase catalytic subunit MsrP, using the quinone pool of the respiratory chain. This is Protein-methionine-sulfoxide reductase heme-binding subunit MsrQ from Shigella dysenteriae serotype 1 (strain Sd197).